A 404-amino-acid polypeptide reads, in one-letter code: MEAGEEPLLLAELKPGRPHQFDWKSSCETWSVAFSPDGSWFAWSQGHCVVKLVPWPLEEQFIPKGFEAKSRSSKNDPKGRGSLKEKTLDCGQIVWGLAFSPWPSPPSRKLWARHHPQAPDVSCLILATGLNDGQIKIWEVQTGLLLLNLSGHQDVVRDLSFTPSGSLILVSASRDKTLRIWDLNKHGKQIQVLSGHLQWVYCCSISPDCSMLCSAAGEKSVFLWSMRSYTLIRKLEGHQSSVVSCDFSPDSALLVTASYDTSVIMWDPYTGERLRSLHHTQLEPTMDDSDVHMSSLRSVCFSPEGLYLATVADDRLLRIWALELKAPVAFAPMTNGLCCTFFPHGGIIATGTRDGHVQFWTAPRVLSSLKHLCRKALRSFLTTYQVLALPIPKKMKEFLTYRTF.

5 WD repeats span residues P105–N148, G151–Q191, G195–K234, G237–S276, and V291–F330. An SOCS box domain is found at H356–F404.

It participates in protein modification; protein ubiquitination. Functionally, may be a substrate-recognition component of a SCF-like ECS (Elongin-Cullin-SOCS-box protein) E3 ubiquitin ligase complex which mediates the ubiquitination and subsequent proteasomal degradation of target proteins. This chain is WD repeat and SOCS box-containing protein 2 (Wsb2), found in Mus musculus (Mouse).